A 253-amino-acid polypeptide reads, in one-letter code: Testis-expressed protein 101 (253 aa).

The signal sequence occupies residues 1–24 (MAACWVHYLLLLLLGVSHQTLAQS). Asparagine 44, asparagine 112, asparagine 117, asparagine 121, and asparagine 162 each carry an N-linked (GlcNAc...) asparagine glycan. Positions 53 to 117 (ETCNPGELCQ…SNYCNSSLCN (65 aa)) constitute a UPAR/Ly6 1 domain. Residues 143 to 218 (CPTCVALGSC…KETCSYHSLL (76 aa)) form the UPAR/Ly6 2 domain. Serine 226 carries the GPI-anchor amidated serine lipid modification. The propeptide at 227-253 (RASGRSTSLWVLELLLPAVLVALTHFP) is removed in mature form.

Interacts with VAMP3. Interacts with LY6K. Interacts with DPEP3; co-localized on the cell surface of spermatocytes, spermatids, and testicular spermatozoa, co-localized only in cytoplasmic droplets of caput and corpus epididymal sperm. Interacts with ADAM5. N-glycosylated; by high mannose and/or biantennary complex and/or certain types of hybrid oligosaccharides; possesses different oligosaccharides chains according to its subcellular localization in the testis. Post-translationally, sheds from membrane raft by ACE and released from the cell surface of epididymal sperm while it passes through the caput epididymis leading to disappearance of TEX101 on spermatozoa; is essential to produce fertile spermatozoa.

The protein localises to the cell membrane. The protein resides in the membrane raft. It is found in the cytoplasmic vesicle. It localises to the secretory vesicle. Its subcellular location is the acrosome. The protein localises to the secreted. In terms of biological role, plays a role in fertilization by controlling binding of sperm to zona pellucida and migration of spermatozoa into the oviduct. May play a role in signal transduction and promote protein tyrosine phosphorylation. This Cricetulus griseus (Chinese hamster) protein is Testis-expressed protein 101.